We begin with the raw amino-acid sequence, 179 residues long: Large ribosomal subunit protein uL5 (179 aa).

The protein belongs to the universal ribosomal protein uL5 family. Part of the 50S ribosomal subunit; part of the 5S rRNA/L5/L18/L25 subcomplex. Contacts the 5S rRNA and the P site tRNA. Forms a bridge to the 30S subunit in the 70S ribosome.

Its function is as follows. This is one of the proteins that bind and probably mediate the attachment of the 5S RNA into the large ribosomal subunit, where it forms part of the central protuberance. In the 70S ribosome it contacts protein S13 of the 30S subunit (bridge B1b), connecting the 2 subunits; this bridge is implicated in subunit movement. Contacts the P site tRNA; the 5S rRNA and some of its associated proteins might help stabilize positioning of ribosome-bound tRNAs. The sequence is that of Large ribosomal subunit protein uL5 from Listeria innocua serovar 6a (strain ATCC BAA-680 / CLIP 11262).